A 462-amino-acid chain; its full sequence is L-seryl-tRNA(Sec) selenium transferase (462 aa).

An N6-(pyridoxal phosphate)lysine modification is found at Lys-293.

It belongs to the SelA family. Pyridoxal 5'-phosphate is required as a cofactor.

The protein localises to the cytoplasm. It catalyses the reaction L-seryl-tRNA(Sec) + selenophosphate + H(+) = L-selenocysteinyl-tRNA(Sec) + phosphate. The protein operates within aminoacyl-tRNA biosynthesis; selenocysteinyl-tRNA(Sec) biosynthesis; selenocysteinyl-tRNA(Sec) from L-seryl-tRNA(Sec) (bacterial route): step 1/1. Functionally, converts seryl-tRNA(Sec) to selenocysteinyl-tRNA(Sec) required for selenoprotein biosynthesis. This Clostridium botulinum (strain Loch Maree / Type A3) protein is L-seryl-tRNA(Sec) selenium transferase.